The following is a 328-amino-acid chain: Dolichyl-diphosphooligosaccharide--protein glycosyltransferase subunit MAGT1 (328 aa).

Residues 1–22 form the signal peptide; the sequence is MAALPVLVLVLLLACGGPRAAG. At 23–177 the chain is on the extracellular side; sequence QKRKEMVLSE…DVNIRVIRPP (155 aa). A Thioredoxin domain is found at 40-168; sequence WTSKRSVIRM…LARWVADRTD (129 aa). N-linked (GlcNAc...) asparagine glycosylation is present at N64. A disulfide bridge links C80 with C83. The helical transmembrane segment at 178 to 198 threads the bilayer; that stretch reads NYAGPLMLGLLLAVIGGLVYL. Residues 199 to 211 are Cytoplasmic-facing; the sequence is RGSNLDFLYNKTG. The chain crosses the membrane as a helical span at residues 212-232; it reads WAFAALCFVLAMTSGQMWNHI. The Extracellular segment spans residues 233–257; sequence RGPPYAHKNPHTGQVNYIHGSSQAQ. The helical transmembrane segment at 258–278 threads the bilayer; it reads FVAETHIVLLFNGGVTLGMVL. Over 279–293 the chain is Cytoplasmic; that stretch reads LHEAATSDMDVGKRK. Residues 294–314 form a helical membrane-spanning segment; sequence IMCIAGIGLVVFFFSWLLSVF. Topologically, residues 315 to 328 are extracellular; it reads RSKYHGYPYSFLMS.

Belongs to the OST3/OST6 family. Accessory component of the STT3B-containing form of the oligosaccharyltransferase (OST) complex. OST exists in two different complex forms which contain common core subunits RPN1, RPN2, OST48, OST4, DAD1 and TMEM258, either STT3A or STT3B as catalytic subunits, and form-specific accessory subunits. OST can form stable complexes with the Sec61 complex or with both the Sec61 and TRAP complexes.

It is found in the cell membrane. Its subcellular location is the endoplasmic reticulum. The protein localises to the endoplasmic reticulum membrane. The protein operates within protein modification; protein glycosylation. Its function is as follows. Accessory component of the STT3B-containing form of the N-oligosaccharyl transferase (OST) complex which catalyzes the transfer of a high mannose oligosaccharide from a lipid-linked oligosaccharide donor to an asparagine residue within an Asn-X-Ser/Thr consensus motif in nascent polypeptide chains. Involved in N-glycosylation of STT3B-dependent substrates. Specifically required for the glycosylation of a subset of acceptor sites that are near cysteine residues; in this function seems to act redundantly with TUSC3. In its oxidized form proposed to form transient mixed disulfides with a glycoprotein substrate to facilitate access of STT3B to the unmodified acceptor site. Also has oxidoreductase-independent functions in the STT3B-containing OST complex possibly involving substrate recognition. Could indirectly play a role in Mg(2+) transport in epithelial cells. This is Dolichyl-diphosphooligosaccharide--protein glycosyltransferase subunit MAGT1 from Gallus gallus (Chicken).